A 177-amino-acid chain; its full sequence is MSLIKIIAITGMPGSGKGELAKLLREKGIKVITMSDVLREKYYKEAKEGERLMDFAKRIRELYGKGAVAKLCIEKIGKEEIVAFDGVRNWEEIEEFKKIGNVTIIAVHSPPKLRYERLLKRGRKDDTLTVEGLMKRDWEELEMGIGNVIALADYILINDSTIEEFKSKAEELLKRIL.

11–18 contacts ATP; it reads GMPGSGKG.

The protein belongs to the UPF0200 family.

The chain is UPF0200 protein STK_09500 from Sulfurisphaera tokodaii (strain DSM 16993 / JCM 10545 / NBRC 100140 / 7) (Sulfolobus tokodaii).